The primary structure comprises 227 residues: Lipoprotein-releasing system ATP-binding protein LolD (227 aa).

Positions 6–227 constitute an ABC transporter domain; the sequence is LVLDDIQKSY…RLDEGVLVSA (222 aa). 43–50 contributes to the ATP binding site; that stretch reads APSGAGKS.

Belongs to the ABC transporter superfamily. Lipoprotein translocase (TC 3.A.1.125) family. The complex is composed of two ATP-binding proteins (LolD) and two transmembrane proteins (LolC and LolE).

The protein localises to the cell inner membrane. In terms of biological role, part of the ABC transporter complex LolCDE involved in the translocation of mature outer membrane-directed lipoproteins, from the inner membrane to the periplasmic chaperone, LolA. Responsible for the formation of the LolA-lipoprotein complex in an ATP-dependent manner. The sequence is that of Lipoprotein-releasing system ATP-binding protein LolD from Jannaschia sp. (strain CCS1).